The chain runs to 190 residues: Potassium-transporting ATPase KdpC subunit (190 aa).

Residues 10–30 (TFIFLLLITGGVYPLLTTVLG) traverse the membrane as a helical segment.

Belongs to the KdpC family. The system is composed of three essential subunits: KdpA, KdpB and KdpC.

Its subcellular location is the cell inner membrane. In terms of biological role, part of the high-affinity ATP-driven potassium transport (or Kdp) system, which catalyzes the hydrolysis of ATP coupled with the electrogenic transport of potassium into the cytoplasm. This subunit acts as a catalytic chaperone that increases the ATP-binding affinity of the ATP-hydrolyzing subunit KdpB by the formation of a transient KdpB/KdpC/ATP ternary complex. The protein is Potassium-transporting ATPase KdpC subunit of Escherichia coli O139:H28 (strain E24377A / ETEC).